A 178-amino-acid chain; its full sequence is Lipid A deacylase PagL (178 aa).

An N-terminal signal peptide occupies residues 1–19; sequence MQFLKKNKPLFGIVTLALA. Catalysis depends on charge relay system residues histidine 154, serine 156, and aspartate 168.

It belongs to the PagL family. As to quaternary structure, homodimer.

The protein localises to the cell outer membrane. The catalysed reaction is a 3-(acyloxy)acyl derivative of bacterial toxin + H2O = a 3-hydroxyacyl derivative of bacterial toxin + a fatty acid + H(+). Functionally, has lipid A 3-O-deacylase activity. Hydrolyzes the ester bond at the 3 position of lipid A, a bioactive component of lipopolysaccharide (LPS), thereby releasing the primary fatty acyl moiety. The polypeptide is Lipid A deacylase PagL (Bordetella bronchiseptica (strain ATCC BAA-588 / NCTC 13252 / RB50) (Alcaligenes bronchisepticus)).